Consider the following 643-residue polypeptide: MHGLLLAGLLALPLNVLAHPTESHSSGVSRRAIDITSYRLPQISKYTKSDAVPKQDGESFTTSSTGDDNVSSGDYVTTATNWLKKTLPKATYRLVNDHYIGDSGIGHVHFRQTAHGIDIDNTDFNVNIGRDGKVFSFGNSFYDGEIPKANPMVKRDFSDPVNALHGAIQTLNLPVTAKPENVKAKPVEGKENFKFEGTSGALSDPKAQLVYLQKDGGLVLSWKVETDVGDNWLLTYVDANKNDQVHSVVDYVSAAEYQVYPWGINDPTEGNRTSIHLPWLKTLSTDWHIDGKGWYPTTRGNNAIAQENPTGHPEYENNYRPKSPLFIFKYPYSLAMTPPSSYRDASITQLFYTTNVYHDVLYILGFNEKAGNFQINNWNKGGVGGDFAILNSQDGSGVNNANFATPPDGQPGRMRMYTWNASTPERDGCFEAGIVIHEYTHGVSNRLTGGPENSRCLAALESGGMGEGWSDFFATAIRLKPGDTRATDYTMGEWASNRPNGIRKYRYSTSLTTNPHMYVDADGLTSVHAIGTIWASMLYELLWNLIDKHGKGDVTKIRPVLKNGVPTDGRHLAMKIVLDGMALQPCLPNFVQARDAILDADKNLTQGSNKCEIWKAFAKRGLGVGAAFNQTKRTGSNELPAGC.

Positions 1–18 (MHGLLLAGLLALPLNVLA) are cleaved as a signal peptide. A propeptide spanning residues 19–254 (HPTESHSSGV…VHSVVDYVSA (236 aa)) is cleaved from the precursor. The segment covering 47–57 (TKSDAVPKQDG) has biased composition (basic and acidic residues). A disordered region spans residues 47–69 (TKSDAVPKQDGESFTTSSTGDDN). Positions 58 to 69 (ESFTTSSTGDDN) are enriched in polar residues. N271 and N420 each carry an N-linked (GlcNAc...) asparagine glycan. Zn(2+) is bound at residue H437. Residue E438 is part of the active site. H441 provides a ligand contact to Zn(2+). 2 N-linked (GlcNAc...) asparagine glycosylation sites follow: N603 and N629.

This sequence belongs to the peptidase M36 family. Zn(2+) is required as a cofactor.

The protein resides in the secreted. Functionally, secreted metalloproteinase probably acting as a virulence factor. In Arthroderma benhamiae (strain ATCC MYA-4681 / CBS 112371) (Trichophyton mentagrophytes), this protein is Probable extracellular metalloproteinase 4 (MEP4).